Here is a 666-residue protein sequence, read N- to C-terminus: uncharacterized protein (666 aa).

This is an uncharacterized protein from Acanthamoeba polyphaga mimivirus (APMV).